The chain runs to 517 residues: RNA-binding region-containing protein 3 (517 aa).

Residues 1-26 (MAAPEQPLAISRGCTSSSSLSPPRGD) are disordered. Ser-21 carries the phosphoserine modification. In terms of domain architecture, RRM 1 spans 27 to 102 (RTLLVRHLPA…HTLVVEFAKE (76 aa)). 2 disordered regions span residues 106-130 (VHSPCPTSGSEKKKRSDDPVEDDKE) and 213-254 (MPLH…DEDR). Ser-108 bears the Phosphoserine mark. A compositionally biased stretch (basic and acidic residues) spans 115–130 (SEKKKRSDDPVEDDKE). The segment covering 217-230 (APLPPTSPQPPEEP) has biased composition (pro residues). Over residues 231 to 252 (PLPEEDEELSSEESEYESTDDE) the composition is skewed to acidic residues. The region spanning 420-503 (CRIYVKNLAK…KPMVVQFARS (84 aa)) is the RRM 2 domain.

In terms of assembly, component of the U11/U12 snRNPs that are part of the U12-type spliceosome. Found in a complex with m(7)G-capped U12 snRNA. Interacts with PDCD7.

The protein localises to the nucleus. Functionally, participates in pre-mRNA U12-dependent splicing, performed by the minor spliceosome which removes U12-type introns. U12-type introns comprises less than 1% of all non-coding sequences. Binds to the 3'-stem-loop of m(7)G-capped U12 snRNA. This is RNA-binding region-containing protein 3 (RNPC3) from Pongo abelii (Sumatran orangutan).